Reading from the N-terminus, the 959-residue chain is rDNA transcriptional regulator pol5 (959 aa).

2 positions are modified to phosphoserine: Ser-742 and Ser-743. The segment at 936–959 is disordered; sequence HQQTSTAASSPQKTGHHENEKTNH. Residues 937–948 show a composition bias toward polar residues; that stretch reads QQTSTAASSPQK. Residues 950 to 959 show a composition bias toward basic and acidic residues; it reads GHHENEKTNH.

It belongs to the MYBBP1A family. As to quaternary structure, interacts with cdc10.

Its subcellular location is the nucleus. In terms of biological role, plays an important role in the regulation of rRNA transcription. Binds to rDNA promoter fragments. The polypeptide is rDNA transcriptional regulator pol5 (pol5) (Schizosaccharomyces pombe (strain 972 / ATCC 24843) (Fission yeast)).